We begin with the raw amino-acid sequence, 303 residues long: Uricase (303 aa).

Alanine 2 is modified (N-acetylalanine). N6-acetyllysine; alternate is present on residues lysine 10 and lysine 23. An N6-succinyllysine; alternate mark is found at lysine 10 and lysine 23. Lysine 23 functions as the Charge relay system in the catalytic mechanism. Residues lysine 27 and lysine 36 each carry the N6-acetyllysine modification. A phosphoserine mark is found at serine 39 and serine 63. The active-site Charge relay system is threonine 68. Threonine 68 and aspartate 69 together coordinate urate. An N6-acetyllysine mark is found at lysine 118, lysine 122, and lysine 164. Residue phenylalanine 170 participates in urate binding. N6-acetyllysine is present on residues lysine 175 and lysine 185. Arginine 187 contributes to the urate binding site. Lysine 220 carries the N6-acetyllysine; alternate modification. An N6-succinyllysine; alternate modification is found at lysine 220. A Phosphoserine modification is found at serine 231. Urate-binding residues include valine 234, glutamine 235, and asparagine 261. Histidine 263 serves as the catalytic Charge relay system. Lysine 277 bears the N6-acetyllysine mark. At tyrosine 288 the chain carries Phosphotyrosine. The Microbody targeting signal signature appears at 301–303 (SRL).

It belongs to the uricase family. Expressed in liver. Not detected in other tissues tested.

It localises to the peroxisome. The catalysed reaction is urate + O2 + H2O = 5-hydroxyisourate + H2O2. The protein operates within purine metabolism; urate degradation; (S)-allantoin from urate: step 1/3. Competitively inhibited by xanthine. Functionally, catalyzes the oxidation of uric acid to 5-hydroxyisourate, which is further processed to form (S)-allantoin. In Rattus norvegicus (Rat), this protein is Uricase (Uox).